Here is a 370-residue protein sequence, read N- to C-terminus: Death-associated protein kinase 2 (370 aa).

One can recognise a Protein kinase domain in the interval Y23–I285. ATP-binding positions include L29 to V37 and K52. The active-site Proton acceptor is D149. The interval Q277 to L344 is calmodulin-binding. An autoinhibitory domain region spans residues Q292–V301. S299 is subject to Phosphoserine. S318 carries the post-translational modification Phosphoserine; by autocatalysis. A disordered region spans residues E348 to S370. S349 is subject to Phosphoserine. The span at R358–S370 shows a compositional bias: basic residues. A Phosphothreonine; by PKB/AKT1 modification is found at T369.

Belongs to the protein kinase superfamily. CAMK Ser/Thr protein kinase family. DAP kinase subfamily. In terms of assembly, homodimer in its autoinhibited state. Active as monomer. Isoform 2 but not isoform 1 can interact with ATF4. Interacts with 14-3-3 proteins YWHAB, YWHAE, YWHAG, YWHAH, YWHAQ, YWHAZ and SFN; the interaction requires DAPK2 phosphorylation at Thr-369 and suppresses DAPK2 kinase activity and DAPK2-induced apoptosis. Mg(2+) is required as a cofactor. Post-translationally, autophosphorylation at Ser-318 inhibits its catalytic activity. Dephosphorylated at Ser-318 in response to activated Fas and TNF-alpha receptors. Expressed in neutrophils and eosinophils. Isoform 2 is expressed in embryonic stem cells (at protein level). Isoform 1 is ubiquitously expressed in all tissue types examined with high levels in heart, lung and skeletal muscle.

It is found in the cytoplasm. Its subcellular location is the cytoplasmic vesicle. It localises to the autophagosome lumen. It catalyses the reaction L-seryl-[protein] + ATP = O-phospho-L-seryl-[protein] + ADP + H(+). The enzyme catalyses L-threonyl-[protein] + ATP = O-phospho-L-threonyl-[protein] + ADP + H(+). Activated by Ca(2+)/calmodulin. Regulated by a double locking mechanism, involving autophosphorylation at Ser-318, calmodulin binding, and dimerization. In the inactive state, Ser-318 is phosphorylated, and the kinase is dimeric. Activation involves: dephosphorylation at Ser-318, release-of-autoinhibition mechanism where calmodulin binding induces a conformational change that relieves the steric block of the active site by the autoinhibitory domain, and generation of the monomeric active form of the kinase. Its function is as follows. Calcium/calmodulin-dependent serine/threonine kinase involved in multiple cellular signaling pathways that trigger cell survival, apoptosis, and autophagy. Regulates both type I apoptotic and type II autophagic cell death signals, depending on the cellular setting. The former is caspase-dependent, while the latter is caspase-independent and is characterized by the accumulation of autophagic vesicles. Acts as a mediator of anoikis and a suppressor of beta-catenin-dependent anchorage-independent growth of malignant epithelial cells. May play a role in granulocytic maturation. Regulates granulocytic motility by controlling cell spreading and polarization. Isoform 2 is not regulated by calmodulin. It can phosphorylate MYL9. It can induce membrane blebbing and autophagic cell death. The polypeptide is Death-associated protein kinase 2 (DAPK2) (Homo sapiens (Human)).